Consider the following 405-residue polypeptide: Arginine biosynthesis bifunctional protein ArgJ (405 aa).

Substrate contacts are provided by threonine 152, lysine 178, threonine 189, glutamate 276, asparagine 400, and threonine 405. The active-site Nucleophile is the threonine 189.

Belongs to the ArgJ family. In terms of assembly, heterotetramer of two alpha and two beta chains.

It is found in the cytoplasm. The catalysed reaction is N(2)-acetyl-L-ornithine + L-glutamate = N-acetyl-L-glutamate + L-ornithine. The enzyme catalyses L-glutamate + acetyl-CoA = N-acetyl-L-glutamate + CoA + H(+). It functions in the pathway amino-acid biosynthesis; L-arginine biosynthesis; L-ornithine and N-acetyl-L-glutamate from L-glutamate and N(2)-acetyl-L-ornithine (cyclic): step 1/1. Its pathway is amino-acid biosynthesis; L-arginine biosynthesis; N(2)-acetyl-L-ornithine from L-glutamate: step 1/4. Its function is as follows. Catalyzes two activities which are involved in the cyclic version of arginine biosynthesis: the synthesis of N-acetylglutamate from glutamate and acetyl-CoA as the acetyl donor, and of ornithine by transacetylation between N(2)-acetylornithine and glutamate. This chain is Arginine biosynthesis bifunctional protein ArgJ, found in Pseudomonas fluorescens (strain Pf0-1).